The sequence spans 440 residues: tRNA(Ile)-lysidine synthase (440 aa).

31-36 is an ATP binding site; it reads SGGADS.

Belongs to the tRNA(Ile)-lysidine synthase family.

Its subcellular location is the cytoplasm. It catalyses the reaction cytidine(34) in tRNA(Ile2) + L-lysine + ATP = lysidine(34) in tRNA(Ile2) + AMP + diphosphate + H(+). Its function is as follows. Ligates lysine onto the cytidine present at position 34 of the AUA codon-specific tRNA(Ile) that contains the anticodon CAU, in an ATP-dependent manner. Cytidine is converted to lysidine, thus changing the amino acid specificity of the tRNA from methionine to isoleucine. This Borreliella burgdorferi (strain ATCC 35210 / DSM 4680 / CIP 102532 / B31) (Borrelia burgdorferi) protein is tRNA(Ile)-lysidine synthase.